A 228-amino-acid polypeptide reads, in one-letter code: Probable C4-dicarboxylate response regulator DctR (228 aa).

The 117-residue stretch at 7 to 123 folds into the Response regulatory domain; that stretch reads TVLLIEDDPM…RMKQALEQYR (117 aa). A 4-aspartylphosphate modification is found at Asp-58. Positions 180 to 199 form a DNA-binding region, H-T-H motif; that stretch reads AEEVADGVGIARVTARRYLE.

Post-translationally, phosphorylated by DctS.

It localises to the cytoplasm. Member of the two-component regulatory system DctS/DctR. Essential for expression of DctP. The polypeptide is Probable C4-dicarboxylate response regulator DctR (dctR) (Priestia megaterium (Bacillus megaterium)).